The primary structure comprises 143 residues: uncharacterized protein (143 aa).

Positions isoleucine 35–leucine 59 are disordered. A compositionally biased stretch (basic and acidic residues) spans threonine 36–isoleucine 52.

This is an uncharacterized protein from Streptomyces fradiae (Streptomyces roseoflavus).